Here is a 129-residue protein sequence, read N- to C-terminus: Glycine cleavage system H protein (129 aa).

Residues 24–106 enclose the Lipoyl-binding domain; that stretch reads TYTVGITEHA…YVGGWIFKIK (83 aa). Position 65 is an N6-lipoyllysine (K65).

This sequence belongs to the GcvH family. The glycine cleavage system is composed of four proteins: P, T, L and H. It depends on (R)-lipoate as a cofactor.

Its function is as follows. The glycine cleavage system catalyzes the degradation of glycine. The H protein shuttles the methylamine group of glycine from the P protein to the T protein. The protein is Glycine cleavage system H protein of Salmonella paratyphi B (strain ATCC BAA-1250 / SPB7).